The primary structure comprises 636 residues: Zinc finger protein 90 (636 aa).

The 72-residue stretch at 14-85 folds into the KRAB domain; it reads VTFKDVAVNF…EKEIQRPFCP (72 aa). C2H2-type zinc fingers lie at residues 208–230, 250–272, 278–300, 306–328, 334–356, 362–384, and 390–412; these read YKCD…EKIH, HECA…QRIH, FECN…ENAH, YQCS…QRIH, YRCN…EVTH, FQCK…ERTH, and FECS…MRIH. Residues 227 to 247 form a disordered region; that stretch reads EKIHKGDPYSNGTDQGAQSGR. Lys-444 participates in a covalent cross-link: Glycyl lysine isopeptide (Lys-Gly) (interchain with G-Cter in SUMO2). 6 C2H2-type zinc fingers span residues 446–468, 494–516, 522–544, 550–572, 578–600, and 606–628; these read YHCN…QRLH, YQCN…HRIH, YECN…ERTH, YECI…ERTH, YECN…QRTH, and YACK…HRVH.

This sequence belongs to the krueppel C2H2-type zinc-finger protein family. In terms of assembly, interacts (via N- and C-termini) with REST (via zinc-finger DNA-binding domain); the interaction inhibits REST repressor activity. In terms of tissue distribution, brain, spleen, thymus, and testis. Expressed in heart.

The protein localises to the nucleus. Functionally, inhibits the transcriptional repressor activity of REST by inhibiting its binding to DNA, thereby derepressing transcription of REST target genes. This chain is Zinc finger protein 90 (Zfp90), found in Mus musculus (Mouse).